The sequence spans 571 residues: Proline--tRNA ligase (571 aa).

Belongs to the class-II aminoacyl-tRNA synthetase family. ProS type 1 subfamily. As to quaternary structure, homodimer.

Its subcellular location is the cytoplasm. The enzyme catalyses tRNA(Pro) + L-proline + ATP = L-prolyl-tRNA(Pro) + AMP + diphosphate. Catalyzes the attachment of proline to tRNA(Pro) in a two-step reaction: proline is first activated by ATP to form Pro-AMP and then transferred to the acceptor end of tRNA(Pro). As ProRS can inadvertently accommodate and process non-cognate amino acids such as alanine and cysteine, to avoid such errors it has two additional distinct editing activities against alanine. One activity is designated as 'pretransfer' editing and involves the tRNA(Pro)-independent hydrolysis of activated Ala-AMP. The other activity is designated 'posttransfer' editing and involves deacylation of mischarged Ala-tRNA(Pro). The misacylated Cys-tRNA(Pro) is not edited by ProRS. The protein is Proline--tRNA ligase of Histophilus somni (strain 2336) (Haemophilus somnus).